The primary structure comprises 1680 residues: SWI/SNF chromatin-remodeling complex subunit snf22 (1680 aa).

Disordered stretches follow at residues 61-135 (QQMR…SQAS), 203-258 (NNSF…HSFS), 274-300 (RRGS…ASPY), and 367-427 (YVYR…VPPT). The segment covering 62–91 (QMRNQSSEFPDAENTNLRKQQDTLPTTGFN) has biased composition (polar residues). Composition is skewed to low complexity over residues 118–127 (GNGNVGLNNP) and 222–233 (SSLPHSFASPSS). The segment covering 234 to 245 (TFEQPHTVQSRA) has biased composition (polar residues). Low complexity-rich tracts occupy residues 247–258 (SVDTTSSSHSFS), 282–299 (PSTF…LASP), and 374–392 (PPSA…SVDP). The segment covering 406–419 (PSPSASALKTQSHV) has biased composition (polar residues). The 37-residue stretch at 429-465 (KLNHAQLAMLKSQIVAYNCLNSPNGQVPPAVQQAIFG) folds into the QLQ domain. Over residues 477-489 (SMPFQQNVPQMSS) the composition is skewed to polar residues. The disordered stretch occupies residues 477-499 (SMPFQQNVPQMSSVKKDTPTRDA). The segment covering 490–499 (VKKDTPTRDA) has biased composition (basic and acidic residues). The region spanning 704–776 (QKTEHAMRQK…ARQRLQALRA (73 aa)) is the HSA domain. Over residues 817–832 (SNIHSGNTSGKGSNSA) the composition is skewed to polar residues. Residues 817–836 (SNIHSGNTSGKGSNSAELEA) form a disordered region. In terms of domain architecture, Helicase ATP-binding spans 881–1046 (LSLYNNNLNG…WALLNFVLPK (166 aa)). 894–901 (DEMGLGKT) contacts ATP. The short motif at 996–999 (DEGH) is the DEGH box element. Residues 1191–1354 (LLDRILPKLF…STPEEREAFL (164 aa)) form the Helicase C-terminal domain. The interval 1466-1511 (TVDDPSSTLMPRKRGRPRKKTNSGSSLSTPLSQESSLARSGRKNTP) is disordered. The segment covering 1476-1486 (PRKRGRPRKKT) has biased composition (basic residues). Low complexity predominate over residues 1488-1502 (SGSSLSTPLSQESSL). The region spanning 1513-1623 (YKQKALRRYC…KTLKEVIEDL (111 aa)) is the Bromo domain.

The protein belongs to the SNF2/RAD54 helicase family. In terms of assembly, component of the SWI/SNF global transcription activator complex composed of at least arp9, arp42, snf5, snf22, snf30, sbf59, sol1, ssr1, ssr2, ssr3, ssr4 and tfg3.

The protein localises to the nucleus. Its function is as follows. Helicase. Component of the SWI/SNF complex, an ATP-dependent chromatin remodeling complex, required for the positive and negative regulation of gene expression of a large number of genes. It changes chromatin structure by altering DNA-histone contacts within a nucleosome, leading eventually to a change in nucleosome position, thus facilitating or repressing binding of gene-specific transcription factors. This chain is SWI/SNF chromatin-remodeling complex subunit snf22 (snf22), found in Schizosaccharomyces pombe (strain 972 / ATCC 24843) (Fission yeast).